Consider the following 566-residue polypeptide: Amino acid transporter 6-1 (566 aa).

11 helical membrane passes run 65 to 85, 137 to 157, 158 to 178, 187 to 207, 216 to 236, 250 to 270, 334 to 354, 367 to 387, 392 to 412, 423 to 443, and 455 to 475; these read YVLLLLYSIVVFTTGAVFYGW, MTFAVACLMSAGAGTLLDWLG, PLWTELLGQLLNLVGWLFLAF, YPALVFIGLGADASMLPTLCI, GLIITILGSAASASFGIPLVL, VSIGYCFFGPVLGVLVALLFM, FFSIRYFLIVLYFVVVSWATS, DVVSVIEVLLPLSFIPCILLG, VVGIIRVLFVMNTSGLLTYVF, LSACCFMVYMSLLTSQVYVYV, and LIGISNLTGGLLSLVSNPLYE. N-linked (GlcNAc...) asparagine glycosylation is present at Asn476. The helical transmembrane segment at 489 to 509 threads the bilayer; that stretch reads IQIAMTALLCVQYVWIFILGF.

This sequence belongs to the SLC43A transporter (TC 2.A.1.44) family.

It localises to the cell membrane. It catalyses the reaction L-lysine(in) = L-lysine(out). The catalysed reaction is L-arginine(in) = L-arginine(out). It carries out the reaction L-methionine(in) = L-methionine(out). The enzyme catalyses L-leucine(in) = L-leucine(out). Cationic and neutral amino acid transporter. Transports lysine with high affinity. Can transport arginine, methionine and leucine. Does not require inorganic ions, such as sodium, chloride, potassium, calcium or magnesium, for transport activity. This chain is Amino acid transporter 6-1, found in Toxoplasma gondii (strain ATCC 50611 / Me49).